A 328-amino-acid chain; its full sequence is Deoxynucleotidyltransferase terminal-interacting protein 1 (328 aa).

Disordered stretches follow at residues 1-30 (MGATGDTEQPRGPGGAERGGLELGDAGAAG) and 142-176 (ELPGIKRGRQAEEESHRGSPIPKKRKGRPPGHVLS). A compositionally biased stretch (gly residues) spans 12–22 (GPGGAERGGLE). Positions 56–147 (MTTSFTDPAI…RLAHELPGIK (92 aa)) are important for dimerization. A compositionally biased stretch (basic and acidic residues) spans 142 to 158 (ELPGIKRGRQAEEESHR). A DNA-binding region (a.T hook) is located at residues 158–172 (RGSPIPKKRKGRPPG). Serine 160 bears the Phosphoserine mark. A Nuclear localization signal motif is present at residues 163–169 (PKKRKGR). The interval 196 to 315 (REGPKWDPAR…MRKYMETLRT (120 aa)) is important for DNA and nucleosome binding. Positions 215-236 (GSRANKALGMGGTRGRIYIKHP) form a DNA-binding region, H-T-H motif.

Monomer and homodimer. A minor proportion may form homotrimers. Interacts with ZNF541. Interacts with the terminal deoxynucleotidyltransferase DNTT. Interacts with TRERF1. Identified in a histone deacetylase complex that contains DNTTIP1, HDAC1 and MIDEAS; this complex assembles into a tetramer that contains four copies of each protein chain. Component of a histone deacetylase complex containing DNTTIP1, ZNF541, HDAC1 and HDAC2. Identified in a complex with KCTD19, HDAC1, HDAC2 and ZNF541.

The protein localises to the nucleus. Functionally, increases DNTT terminal deoxynucleotidyltransferase activity (in vitro). Also acts as a transcriptional regulator, binding to the consensus sequence 5'-GNTGCATG-3' following an AT-tract. Associates with RAB20 promoter and positively regulates its transcription. Binds DNA and nucleosomes; may recruit HDAC1 complexes to nucleosomes or naked DNA. This chain is Deoxynucleotidyltransferase terminal-interacting protein 1 (Dnttip1), found in Mus musculus (Mouse).